A 417-amino-acid chain; its full sequence is Serine hydroxymethyltransferase (417 aa).

(6S)-5,6,7,8-tetrahydrofolate-binding positions include Leu121 and Gly125–Leu127. Residue Lys229 is modified to N6-(pyridoxal phosphate)lysine. Ser355–Phe357 is a binding site for (6S)-5,6,7,8-tetrahydrofolate.

It belongs to the SHMT family. As to quaternary structure, homodimer. It depends on pyridoxal 5'-phosphate as a cofactor.

The protein localises to the cytoplasm. The enzyme catalyses (6R)-5,10-methylene-5,6,7,8-tetrahydrofolate + glycine + H2O = (6S)-5,6,7,8-tetrahydrofolate + L-serine. It functions in the pathway one-carbon metabolism; tetrahydrofolate interconversion. Its pathway is amino-acid biosynthesis; glycine biosynthesis; glycine from L-serine: step 1/1. Its function is as follows. Catalyzes the reversible interconversion of serine and glycine with tetrahydrofolate (THF) serving as the one-carbon carrier. This reaction serves as the major source of one-carbon groups required for the biosynthesis of purines, thymidylate, methionine, and other important biomolecules. Also exhibits THF-independent aldolase activity toward beta-hydroxyamino acids, producing glycine and aldehydes, via a retro-aldol mechanism. The sequence is that of Serine hydroxymethyltransferase from Photorhabdus laumondii subsp. laumondii (strain DSM 15139 / CIP 105565 / TT01) (Photorhabdus luminescens subsp. laumondii).